The sequence spans 214 residues: MRSISTLLFIISTFISLVSALQLAIPATTNPDPFCIRDFVQEEQMVVVNIKTNGNSGDGQRLDLRIVDSLGNEYRRKNDIAGSVKIGFTSHNSAAFDICFTNQLERKWSKNTNFVREIELDVESGAAARDWNAVQAAEKLKPVEVDLRRIEETTYEISGELQYLKAREERMRDTNESTNSRVKWFSILVITSLVGLGAWQVQYLRHYFKVKHII.

A signal peptide spans 1–20 (MRSISTLLFIISTFISLVSA). The Lumenal segment spans residues 21–183 (LQLAIPATTN…TNESTNSRVK (163 aa)). Residues 33–124 (PFCIRDFVQE…VREIELDVES (92 aa)) form the GOLD domain. The chain crosses the membrane as a helical span at residues 184 to 204 (WFSILVITSLVGLGAWQVQYL). Residues 205-214 (RHYFKVKHII) lie on the Cytoplasmic side of the membrane.

Belongs to the EMP24/GP25L family.

The protein resides in the endoplasmic reticulum membrane. The protein localises to the golgi apparatus membrane. Constituent of COPII-coated endoplasmic reticulum-derived transport vesicles. Required for efficient transport of a subset of secretory proteins to the Golgi. Facilitates retrograde transport from the Golgi to the endoplasmic reticulum. This chain is Endoplasmic reticulum vesicle protein 25 (ERV25), found in Debaryomyces hansenii (strain ATCC 36239 / CBS 767 / BCRC 21394 / JCM 1990 / NBRC 0083 / IGC 2968) (Yeast).